Consider the following 530-residue polypeptide: Phosphoenolpyruvate carboxykinase (ATP) (530 aa).

Substrate contacts are provided by Arg-58, Tyr-195, and Lys-201. ATP is bound by residues Lys-201, His-220, and 236–244 (GLSGTGKTT). Residues Lys-201 and His-220 each coordinate Mn(2+). Asp-257 contributes to the Mn(2+) binding site. ATP-binding positions include Glu-285, Arg-321, 440-441 (RI), and Thr-446. Position 321 (Arg-321) interacts with substrate.

It belongs to the phosphoenolpyruvate carboxykinase (ATP) family. The cofactor is Mn(2+).

The protein localises to the cytoplasm. It catalyses the reaction oxaloacetate + ATP = phosphoenolpyruvate + ADP + CO2. It participates in carbohydrate biosynthesis; gluconeogenesis. In terms of biological role, involved in the gluconeogenesis. Catalyzes the conversion of oxaloacetate (OAA) to phosphoenolpyruvate (PEP) through direct phosphoryl transfer between the nucleoside triphosphate and OAA. This is Phosphoenolpyruvate carboxykinase (ATP) from Staphylococcus aureus (strain MSSA476).